A 405-amino-acid polypeptide reads, in one-letter code: Putative polysaccharide ligase RT0347 (405 aa).

10 helical membrane-spanning segments follow: residues 23-43 (IAATVLFFLLIIVITELISFI), 77-97 (LFIAWCFISCLFTIHPINSLV), 120-140 (ILYLKNSLILGIITAILLFFI), 156-178 (FGLYMLDRGCALLSITTWVVIII), 201-221 (ISDSLASFVGFSIGGIIFILA), 227-247 (IFFKLITISLITGSLLFPIIA), 270-290 (LFIWHFVANKIIIKPILGYGF), 322-342 (ILQITLELGILGLALFLCLVY), 353-375 (ISNFRAASYSCFINYYIIGMISY), and 377-397 (IWQTWWILSGIWILVLMKLLV).

Belongs to the O-antigen ligase family.

The protein localises to the membrane. The polypeptide is Putative polysaccharide ligase RT0347 (Rickettsia typhi (strain ATCC VR-144 / Wilmington)).